A 217-amino-acid chain; its full sequence is Ribosome maturation factor RimM (217 aa).

Residues 115 to 186 enclose the PRC barrel domain; it reads EDAWYDNQLV…TVTLTPPPGL (72 aa). Residues 181–217 are disordered; the sequence is TPPPGLFEDLPDDAPAAGDESEPVSPPVTAEETPGGE.

The protein belongs to the RimM family. As to quaternary structure, binds ribosomal protein uS19.

It localises to the cytoplasm. Functionally, an accessory protein needed during the final step in the assembly of 30S ribosomal subunit, possibly for assembly of the head region. Essential for efficient processing of 16S rRNA. May be needed both before and after RbfA during the maturation of 16S rRNA. It has affinity for free ribosomal 30S subunits but not for 70S ribosomes. This Leifsonia xyli subsp. xyli (strain CTCB07) protein is Ribosome maturation factor RimM.